Reading from the N-terminus, the 137-residue chain is Large ribosomal subunit protein uL16 (137 aa).

Positions 1–17 are enriched in basic residues; that stretch reads MLQPKRTKFRKQQKGRN. Residues 1–21 are disordered; that stretch reads MLQPKRTKFRKQQKGRNRGQA.

The protein belongs to the universal ribosomal protein uL16 family. As to quaternary structure, part of the 50S ribosomal subunit.

Its function is as follows. Binds 23S rRNA and is also seen to make contacts with the A and possibly P site tRNAs. This is Large ribosomal subunit protein uL16 from Nitrosococcus oceani (strain ATCC 19707 / BCRC 17464 / JCM 30415 / NCIMB 11848 / C-107).